Reading from the N-terminus, the 194-residue chain is Fibroblast growth factor 7 (194 aa).

An N-terminal signal peptide occupies residues 1 to 31 (MRKWILTWILPTLLYRSCFHIICLVGTISLA). An N-linked (GlcNAc...) asparagine glycan is attached at asparagine 45.

The protein belongs to the heparin-binding growth factors family. As to quaternary structure, interacts with FGFBP1. Interacts with FGFR2. Affinity between fibroblast growth factors (FGFs) and their receptors is increased by heparan sulfate glycosaminoglycans that function as coreceptors.

Its subcellular location is the secreted. Functionally, plays an important role in the regulation of embryonic development, cell proliferation and cell differentiation. Required for normal branching morphogenesis. Growth factor active on keratinocytes. Possible major paracrine effector of normal epithelial cell proliferation. The protein is Fibroblast growth factor 7 (FGF7) of Canis lupus familiaris (Dog).